A 174-amino-acid polypeptide reads, in one-letter code: Shikimate kinase (174 aa).

An ATP-binding site is contributed by 15–20; sequence GTGKST. S19 serves as a coordination point for Mg(2+). 3 residues coordinate substrate: D37, R61, and G82. R120 is an ATP binding site. R138 serves as a coordination point for substrate.

Belongs to the shikimate kinase family. In terms of assembly, monomer. The cofactor is Mg(2+).

It localises to the cytoplasm. The catalysed reaction is shikimate + ATP = 3-phosphoshikimate + ADP + H(+). It participates in metabolic intermediate biosynthesis; chorismate biosynthesis; chorismate from D-erythrose 4-phosphate and phosphoenolpyruvate: step 5/7. Its function is as follows. Catalyzes the specific phosphorylation of the 3-hydroxyl group of shikimic acid using ATP as a cosubstrate. In Staphylococcus aureus (strain MSSA476), this protein is Shikimate kinase.